The sequence spans 336 residues: MSSAVPLNVGITRSADSGASRADGEKRVLLAEPRGYCAGVDRAVETVEKALEKHGAPIYVRKEIVHNRHVVDTLTDQGVVFVDETDEVPEGALLVFSAHGVSPAVHESAAARNLRTIDATCPLVTKVHQEAKRFARDDFDILLIGHEGHEEVEGTAGEAPDHVQLVDGPDSVDAVTVRDESKVIWLSQTTLSVDETMQTVARLRERFPNLQDPPSDDICYATQNRQVAVKAMAPECDLVIVVGSRNSSNSVRLVEVALNAGAKASYLVDYAREVDPAWLDGVRTVGITSGASVPEILVRGVIDLLDEHGFHDVQPVTTANETLVFALPRELRAART.

Cysteine 37 contacts [4Fe-4S] cluster. (2E)-4-hydroxy-3-methylbut-2-enyl diphosphate is bound by residues histidine 66 and histidine 99. Residues histidine 66 and histidine 99 each coordinate dimethylallyl diphosphate. Residues histidine 66 and histidine 99 each coordinate isopentenyl diphosphate. [4Fe-4S] cluster is bound at residue cysteine 121. A (2E)-4-hydroxy-3-methylbut-2-enyl diphosphate-binding site is contributed by histidine 149. Histidine 149 is a dimethylallyl diphosphate binding site. Isopentenyl diphosphate is bound at residue histidine 149. Glutamate 151 (proton donor) is an active-site residue. Threonine 189 contacts (2E)-4-hydroxy-3-methylbut-2-enyl diphosphate. Cysteine 219 contacts [4Fe-4S] cluster. Positions 247, 248, 249, and 292 each coordinate (2E)-4-hydroxy-3-methylbut-2-enyl diphosphate. Serine 247, serine 248, asparagine 249, and serine 292 together coordinate dimethylallyl diphosphate. Residues serine 247, serine 248, asparagine 249, and serine 292 each contribute to the isopentenyl diphosphate site.

It belongs to the IspH family. [4Fe-4S] cluster serves as cofactor.

It catalyses the reaction isopentenyl diphosphate + 2 oxidized [2Fe-2S]-[ferredoxin] + H2O = (2E)-4-hydroxy-3-methylbut-2-enyl diphosphate + 2 reduced [2Fe-2S]-[ferredoxin] + 2 H(+). It carries out the reaction dimethylallyl diphosphate + 2 oxidized [2Fe-2S]-[ferredoxin] + H2O = (2E)-4-hydroxy-3-methylbut-2-enyl diphosphate + 2 reduced [2Fe-2S]-[ferredoxin] + 2 H(+). Its pathway is isoprenoid biosynthesis; dimethylallyl diphosphate biosynthesis; dimethylallyl diphosphate from (2E)-4-hydroxy-3-methylbutenyl diphosphate: step 1/1. It participates in isoprenoid biosynthesis; isopentenyl diphosphate biosynthesis via DXP pathway; isopentenyl diphosphate from 1-deoxy-D-xylulose 5-phosphate: step 6/6. Its function is as follows. Catalyzes the conversion of 1-hydroxy-2-methyl-2-(E)-butenyl 4-diphosphate (HMBPP) into a mixture of isopentenyl diphosphate (IPP) and dimethylallyl diphosphate (DMAPP). Acts in the terminal step of the DOXP/MEP pathway for isoprenoid precursor biosynthesis. The chain is 4-hydroxy-3-methylbut-2-enyl diphosphate reductase from Rhodococcus jostii (strain RHA1).